The sequence spans 481 residues: 4-O-methyl-glucuronoyl methylesterase (481 aa).

The first 21 residues, 1–21 (MVSQTVVSSLLVVLGAAGVRA), serve as a signal peptide directing secretion. A CBM1 domain is found at 23 to 59 (QRQSLWGQCGGSGWSGPTLCVDGAWCNPQNQWYHQCI). 3 cysteine pairs are disulfide-bonded: Cys-108–Cys-143, Cys-292–Cys-428, and Cys-324–Cys-400. Residues 291 to 296 (GCSRNG) carry the GXSYXG catalytic site motif motif. Ser-293 serves as the catalytic Nucleophile. The substrate site is built by Lys-297, Gln-339, Glu-347, and Trp-391. Catalysis depends on His-427, which acts as the Proton donor/acceptor.

Belongs to the carbohydrate esterase 15 (CE15) family.

It is found in the secreted. It catalyses the reaction a 4-O-methyl-alpha-D-glucuronosyl ester derivative + H2O = 4-O-methyl-alpha-D-glucuronate derivative + an alcohol + H(+). Glucuronoyl esterase which may play a significant role in biomass degradation, as it is considered to disconnect hemicellulose from lignin through the hydrolysis of the ester bond between 4-O-methyl-D-glucuronic acid residues of glucuronoxylans and aromatic alcohols of lignin. The sequence is that of 4-O-methyl-glucuronoyl methylesterase from Podospora anserina (strain S / ATCC MYA-4624 / DSM 980 / FGSC 10383) (Pleurage anserina).